A 262-amino-acid polypeptide reads, in one-letter code: Zinc import ATP-binding protein ZnuC (262 aa).

The ABC transporter domain occupies 5 to 220; it reads VSLEQLCVEF…PSYIALFGNA (216 aa). 37-44 lines the ATP pocket; it reads GPNGAGKS. Residues 236 to 262 are disordered; the sequence is HHDLSGSPVSGDATSCSNHNHGHHHHD.

It belongs to the ABC transporter superfamily. Zinc importer (TC 3.A.1.15.5) family. In terms of assembly, the complex is composed of two ATP-binding proteins (ZnuC), two transmembrane proteins (ZnuB) and a solute-binding protein (ZnuA).

The protein localises to the cell inner membrane. It carries out the reaction Zn(2+)(out) + ATP(in) + H2O(in) = Zn(2+)(in) + ADP(in) + phosphate(in) + H(+)(in). Its function is as follows. Part of the ABC transporter complex ZnuABC involved in zinc import. Responsible for energy coupling to the transport system. In Vibrio parahaemolyticus serotype O3:K6 (strain RIMD 2210633), this protein is Zinc import ATP-binding protein ZnuC.